The primary structure comprises 134 residues: Mini-ribonuclease 3 (134 aa).

D22 is a catalytic residue.

Belongs to the MrnC RNase family. In terms of assembly, homodimer. The cofactor is Mg(2+).

The protein resides in the cytoplasm. Functionally, involved in correct processing of both the 5' and 3' ends of 23S rRNA precursor. Processes 30S rRNA precursor transcript even in absence of ribonuclease 3 (Rnc); Rnc processes 30S rRNA into smaller rRNA precursors. This is Mini-ribonuclease 3 from Staphylococcus aureus (strain NCTC 8325 / PS 47).